We begin with the raw amino-acid sequence, 157 residues long: ATP synthase subunit b' (157 aa).

A helical membrane pass occupies residues 22–42 (ATLPLIAIQFLLLVAVLNSLF).

The protein belongs to the ATPase B chain family. F-type ATPases have 2 components, F(1) - the catalytic core - and F(0) - the membrane proton channel. F(1) has five subunits: alpha(3), beta(3), gamma(1), delta(1), epsilon(1). F(0) has four main subunits: a(1), b(1), b'(1) and c(10-14). The alpha and beta chains form an alternating ring which encloses part of the gamma chain. F(1) is attached to F(0) by a central stalk formed by the gamma and epsilon chains, while a peripheral stalk is formed by the delta, b and b' chains.

It is found in the cellular thylakoid membrane. In terms of biological role, f(1)F(0) ATP synthase produces ATP from ADP in the presence of a proton or sodium gradient. F-type ATPases consist of two structural domains, F(1) containing the extramembraneous catalytic core and F(0) containing the membrane proton channel, linked together by a central stalk and a peripheral stalk. During catalysis, ATP synthesis in the catalytic domain of F(1) is coupled via a rotary mechanism of the central stalk subunits to proton translocation. Its function is as follows. Component of the F(0) channel, it forms part of the peripheral stalk, linking F(1) to F(0). The b'-subunit is a diverged and duplicated form of b found in plants and photosynthetic bacteria. The polypeptide is ATP synthase subunit b' (Synechococcus sp. (strain JA-2-3B'a(2-13)) (Cyanobacteria bacterium Yellowstone B-Prime)).